The sequence spans 244 residues: 2-C-methyl-D-erythritol 4-phosphate cytidylyltransferase (244 aa).

The protein belongs to the IspD/TarI cytidylyltransferase family. IspD subfamily.

It carries out the reaction 2-C-methyl-D-erythritol 4-phosphate + CTP + H(+) = 4-CDP-2-C-methyl-D-erythritol + diphosphate. The protein operates within isoprenoid biosynthesis; isopentenyl diphosphate biosynthesis via DXP pathway; isopentenyl diphosphate from 1-deoxy-D-xylulose 5-phosphate: step 2/6. In terms of biological role, catalyzes the formation of 4-diphosphocytidyl-2-C-methyl-D-erythritol from CTP and 2-C-methyl-D-erythritol 4-phosphate (MEP). This chain is 2-C-methyl-D-erythritol 4-phosphate cytidylyltransferase, found in Corynebacterium diphtheriae (strain ATCC 700971 / NCTC 13129 / Biotype gravis).